The following is a 504-amino-acid chain: MTQTNGFDALHAHAQRLRGAAIPALLAAEPERPTQYARQVGPLYFNFARQKYDRAALDALFAIARERDLSGAFQRLFRGEQVNVTEQRAALHTALRGDLTDAPVASEAYATAEEVRQRMGSLIQQLEATDVTDIVSVGIGGSDLGPRLVADALRAPSGARFRVHFVSNVDGAAMQRTLATLDPARTAGILISKTFGTQETLLNGSILHAWLGGSERLYAVSANPERAAKAFDIAPGRVLPMWDWVGGRYSLWSAVGFPIALAIGFERFEQLLEGAAQFDAHVLNTPLEENVAVLHGLTAVWNRNLLGSATHAVMTYDQRLALLPAYLQQLVMESLGKRVKLDGSAVDSDTVSVWWGGAGTDVQHSFFQALHQGTSVVPADFIGTVHNDDPYAENHTALMANVLAQTEALANGQDSSDPHRSYPGGRPSTVILLDALTPQALGALISMYEHSVYVQSVMWGINAFDQFGVELGKQLASQLLPALKGESVDVADPVTRELLNKLRG.

The Proton donor role is filled by Glu333. Catalysis depends on residues His364 and Lys473.

This sequence belongs to the GPI family.

Its subcellular location is the cytoplasm. It catalyses the reaction alpha-D-glucose 6-phosphate = beta-D-fructose 6-phosphate. Its pathway is carbohydrate biosynthesis; gluconeogenesis. It participates in carbohydrate degradation; glycolysis; D-glyceraldehyde 3-phosphate and glycerone phosphate from D-glucose: step 2/4. Its function is as follows. Catalyzes the reversible isomerization of glucose-6-phosphate to fructose-6-phosphate. The polypeptide is Glucose-6-phosphate isomerase (Xanthomonas axonopodis pv. citri (strain 306)).